Here is a 169-residue protein sequence, read N- to C-terminus: Ribosome maturation factor RimM (169 aa).

In terms of domain architecture, PRC barrel spans 97-169 (EDEVYFKDLI…KIVVDWEYDY (73 aa)).

It belongs to the RimM family. In terms of assembly, binds ribosomal protein uS19.

The protein resides in the cytoplasm. Functionally, an accessory protein needed during the final step in the assembly of 30S ribosomal subunit, possibly for assembly of the head region. Essential for efficient processing of 16S rRNA. May be needed both before and after RbfA during the maturation of 16S rRNA. It has affinity for free ribosomal 30S subunits but not for 70S ribosomes. This Francisella tularensis subsp. tularensis (strain FSC 198) protein is Ribosome maturation factor RimM.